The sequence spans 1500 residues: Carbamoyl-phosphate synthase [ammonia], mitochondrial (1500 aa).

The N-terminal 38 residues, 1–38 (MTRILTAFKVVRTLKTGFGFTNVTAHQKWKFSRPGIRL), are a transit peptide targeting the mitochondrion. Positions 39-218 (LSVKAQTAHI…VKVYGKGNPT (180 aa)) are anthranilate phosphoribosyltransferase homolog. N6-acetyllysine; alternate occurs at positions 55, 57, and 119. K55 is subject to N6-glutaryllysine; alternate. N6-succinyllysine; alternate occurs at positions 55, 57, and 119. The residue at position 148 (S148) is a Phosphoserine. N6-acetyllysine; alternate is present on residues K157 and K171. K157 is subject to N6-succinyllysine; alternate. The residue at position 171 (K171) is an N6-glutaryllysine; alternate. An N6-glutaryllysine modification is found at K176. N6-acetyllysine is present on residues K182 and K197. N6-acetyllysine; alternate occurs at positions 207, 210, 214, 219, and 228. An N6-glutaryllysine; alternate mark is found at K207, K210, K214, K219, and K228. K207 bears the N6-succinyllysine; alternate mark. K214 carries the post-translational modification N6-succinyllysine; alternate. The 186-residue stretch at 219 to 404 (KVVAVDCGIK…FSLIKKGKAT (186 aa)) folds into the Glutamine amidotransferase type-1 domain. K237 bears the N6-glutaryllysine mark. An N6-acetyllysine; alternate mark is found at K280, K287, K307, and K310. Position 280 is an N6-glutaryllysine; alternate (K280). N6-succinyllysine; alternate is present on residues K287 and K307. 2 positions are modified to N6-glutaryllysine; alternate: K307 and K310. Position 400 is an N6-succinyllysine (K400). 4 positions are modified to N6-glutaryllysine; alternate: K402, K412, K453, and K458. N6-succinyllysine; alternate is present on residues K402 and K412. 6 positions are modified to N6-acetyllysine; alternate: K412, K453, K458, K522, K527, and K532. K458, K522, and K527 each carry N6-succinyllysine; alternate. An N6-glutaryllysine; alternate mark is found at K527 and K532. A Phosphoserine; alternate modification is found at S537. S537 carries O-linked (GlcNAc) serine; alternate glycosylation. S540 is modified (phosphoserine). Positions 551–743 (SDKLNEINEK…LAFIAAKIAL (193 aa)) constitute an ATP-grasp 1 domain. Residues K553 and K560 each carry the N6-acetyllysine; alternate modification. An N6-glutaryllysine; alternate modification is found at K553. N6-succinyllysine; alternate is present on residues K553 and K560. S569 carries the post-translational modification Phosphoserine. N6-acetyllysine; alternate occurs at positions 575 and 612. Residues K575 and K612 each carry the N6-succinyllysine; alternate modification. K630 carries the N6-acetyllysine modification. K728 bears the N6-glutaryllysine mark. K751, K757, K772, K793, K811, and K831 each carry N6-acetyllysine; alternate. An N6-succinyllysine; alternate mark is found at K751 and K757. N6-glutaryllysine; alternate occurs at positions 757, 772, 793, and 811. Position 793 is an N6-succinyllysine; alternate (K793). The residue at position 831 (K831) is an N6-succinyllysine; alternate. Residue S835 is modified to Phosphoserine. K841 and K856 each carry N6-acetyllysine; alternate. Residues K841 and K856 each carry the N6-glutaryllysine; alternate modification. K869 carries the post-translational modification N6-glutaryllysine. K875, K889, and K892 each carry N6-acetyllysine; alternate. Residues K875, K889, and K892 each carry the N6-glutaryllysine; alternate modification. Residues K875, K889, and K892 each carry the N6-succinyllysine; alternate modification. Phosphoserine is present on residues S896 and S898. An N6-glutaryllysine modification is found at K905. Residues K908, K915, and K919 each carry the N6-acetyllysine; alternate modification. N6-glutaryllysine; alternate is present on residues K908, K915, and K919. N6-succinyllysine; alternate is present on residues K915 and K919. K935 bears the N6-acetyllysine mark. At S1036 the chain carries Phosphoserine. An N6-acetyllysine; alternate modification is found at K1074. At K1074 the chain carries N6-glutaryllysine; alternate. N6-succinyllysine; alternate is present on K1074. Residues S1079, S1090, and S1093 each carry the phosphoserine modification. The 192-residue stretch at 1093–1284 (SAVLDELKVA…FIDVATKVMI (192 aa)) folds into the ATP-grasp 2 domain. Position 1100 is an N6-acetyllysine; alternate (K1100). Residue K1100 is modified to N6-succinyllysine; alternate. K1149 bears the N6-succinyllysine mark. K1150 is modified (N6-glutaryllysine). N6-acetyllysine; alternate occurs at positions 1168 and 1183. K1168 and K1183 each carry N6-glutaryllysine; alternate. K1168 and K1183 each carry N6-succinyllysine; alternate. S1203 carries the phosphoserine modification. K1222 is subject to N6-acetyllysine. An N6-glutaryllysine modification is found at K1224. N6-acetyllysine; alternate is present on residues K1232, K1269, and K1291. 3 positions are modified to N6-succinyllysine; alternate: K1232, K1269, and K1291. S1331 carries O-linked (GlcNAc) serine glycosylation. T1332 carries O-linked (GlcNAc) threonine glycosylation. The MGS-like domain occupies 1355–1500 (FKIPQKGILI…YRQYSAGKAA (146 aa)). N6-acetyllysine; alternate is present on K1356. 2 positions are modified to N6-glutaryllysine; alternate: K1356 and K1360. K1356 and K1360 each carry N6-succinyllysine; alternate. Residues T1391, T1394, and W1410 each contribute to the N-acetyl-L-glutamate site. Phosphoserine occurs at positions 1419 and 1431. Residues N1437 and N1440 each contribute to the N-acetyl-L-glutamate site. K1444 bears the N6-acetyllysine; alternate mark. K1444 is modified (N6-succinyllysine; alternate). N-acetyl-L-glutamate is bound at residue N1449. Residues K1471, K1479, and K1486 each carry the N6-acetyllysine; alternate modification. Residues K1471, K1479, and K1486 each carry the N6-succinyllysine; alternate modification. Residues K1479 and K1486 each carry the N6-glutaryllysine; alternate modification.

In terms of assembly, can form homooligomers (monomers as predominant form and dimers). Post-translationally, undergoes proteolytic cleavage in the C-terminal region corresponding to the loss of approximately 12 AA residues from the C-terminus. Succinylated at Lys-287 and Lys-1291. Desuccinylated at Lys-1291 by SIRT5, leading to activation. In terms of processing, glutarylated. Glutarylation levels increase during fasting. Deglutarylated by SIRT5 at Lys-55, Lys-219, Lys-412, Lys-889, Lys-892, Lys-915, Lys-1360 and Lys-1486, leading to activation. Primarily in the liver and small intestine.

Its subcellular location is the mitochondrion. It is found in the nucleus. It localises to the nucleolus. The protein resides in the cell membrane. The catalysed reaction is hydrogencarbonate + NH4(+) + 2 ATP = carbamoyl phosphate + 2 ADP + phosphate + 2 H(+). With respect to regulation, requires N-acetyl-L-glutamate (NAG) as an allosteric activator. Activated by glycerol in the absence of NAG, whereas in the presence of NAG it is inhibited by increasing concentrations of glycerol. Involved in the urea cycle of ureotelic animals where the enzyme plays an important role in removing excess ammonia from the cell. The chain is Carbamoyl-phosphate synthase [ammonia], mitochondrial (CPS1) from Homo sapiens (Human).